The primary structure comprises 124 residues: Small ribosomal subunit protein uS12 (124 aa).

Asp89 is modified (3-methylthioaspartic acid).

This sequence belongs to the universal ribosomal protein uS12 family. Part of the 30S ribosomal subunit. Contacts proteins S8 and S17. May interact with IF1 in the 30S initiation complex.

With S4 and S5 plays an important role in translational accuracy. In terms of biological role, interacts with and stabilizes bases of the 16S rRNA that are involved in tRNA selection in the A site and with the mRNA backbone. Located at the interface of the 30S and 50S subunits, it traverses the body of the 30S subunit contacting proteins on the other side and probably holding the rRNA structure together. The combined cluster of proteins S8, S12 and S17 appears to hold together the shoulder and platform of the 30S subunit. In Klebsiella pneumoniae (strain 342), this protein is Small ribosomal subunit protein uS12.